A 170-amino-acid chain; its full sequence is Urease accessory protein UreE (170 aa).

It belongs to the UreE family.

The protein resides in the cytoplasm. Functionally, involved in urease metallocenter assembly. Binds nickel. Probably functions as a nickel donor during metallocenter assembly. The sequence is that of Urease accessory protein UreE from Helicobacter pylori (strain G27).